Reading from the N-terminus, the 413-residue chain is Gamma-glutamyl phosphate reductase (413 aa).

Belongs to the gamma-glutamyl phosphate reductase family.

It localises to the cytoplasm. The catalysed reaction is L-glutamate 5-semialdehyde + phosphate + NADP(+) = L-glutamyl 5-phosphate + NADPH + H(+). It participates in amino-acid biosynthesis; L-proline biosynthesis; L-glutamate 5-semialdehyde from L-glutamate: step 2/2. Functionally, catalyzes the NADPH-dependent reduction of L-glutamate 5-phosphate into L-glutamate 5-semialdehyde and phosphate. The product spontaneously undergoes cyclization to form 1-pyrroline-5-carboxylate. The polypeptide is Gamma-glutamyl phosphate reductase (Thermus thermophilus (strain ATCC BAA-163 / DSM 7039 / HB27)).